We begin with the raw amino-acid sequence, 205 residues long: MPKQIDHEKRRKQIAEATWRVILERGMEGASARNIAKEAGLSLGALRHYFSTQDELLAFAMKLVQEKVTDRIKDIAVRDLLPKEKVLQILLEMVPTNEETIREMEVWFAFTAYARHKKDMFDASHDGIFSGMRNLIAYLDESDLLKQNADKDIEAERLYALVDGLALHAMLDPVRVNKDRIKRVIMQHVESICVEDTRETQKRHP.

The region spanning 8–68 (EKRRKQIAEA…FAMKLVQEKV (61 aa)) is the HTH tetR-type domain. The H-T-H motif DNA-binding region spans 31–50 (SARNIAKEAGLSLGALRHYF).

Its function is as follows. Transcriptional regulation of the polyketide synthase operon. This chain is HTH-type transcriptional regulator PksA (pksA), found in Bacillus subtilis (strain 168).